A 362-amino-acid polypeptide reads, in one-letter code: Protein-glutamate methylesterase/protein-glutamine glutaminase (362 aa).

Positions 10–127 (RVLVVDDSAF…SLNMHVARDE (118 aa)) constitute a Response regulatory domain. Position 61 is a 4-aspartylphosphate (Asp-61). The CheB-type methylesterase domain maps to 173–362 (RLPRRLVLIG…DAITRAVGEG (190 aa)). Catalysis depends on residues Ser-184, His-211, and Asp-304.

The protein belongs to the CheB family. In terms of processing, phosphorylated by CheA. Phosphorylation of the N-terminal regulatory domain activates the methylesterase activity.

It localises to the cytoplasm. The catalysed reaction is [protein]-L-glutamate 5-O-methyl ester + H2O = L-glutamyl-[protein] + methanol + H(+). The enzyme catalyses L-glutaminyl-[protein] + H2O = L-glutamyl-[protein] + NH4(+). In terms of biological role, involved in chemotaxis. Part of a chemotaxis signal transduction system that modulates chemotaxis in response to various stimuli. Catalyzes the demethylation of specific methylglutamate residues introduced into the chemoreceptors (methyl-accepting chemotaxis proteins or MCP) by CheR. Also mediates the irreversible deamidation of specific glutamine residues to glutamic acid. In Symbiobacterium thermophilum (strain DSM 24528 / JCM 14929 / IAM 14863 / T), this protein is Protein-glutamate methylesterase/protein-glutamine glutaminase.